The primary structure comprises 336 residues: Peroxidase 11 (336 aa).

Positions 1 to 20 (MMRLLFVFFMVHTIFIPCFS) are cleaved as a signal peptide. 4 disulfides stabilise this stretch: Cys-39-Cys-119, Cys-72-Cys-77, Cys-125-Cys-331, and Cys-204-Cys-236. Catalysis depends on His-70, which acts as the Proton acceptor. Residues Asp-71, Val-74, Gly-76, Asp-78, and Ser-80 each contribute to the Ca(2+) site. Substrate is bound at residue Pro-167. A heme b-binding site is contributed by His-197. Ca(2+) is bound at residue Thr-198. N-linked (GlcNAc...) asparagine glycosylation occurs at Asn-246. Residues Asp-251, Thr-254, and Asp-259 each contribute to the Ca(2+) site.

It belongs to the peroxidase family. Classical plant (class III) peroxidase subfamily. Heme b serves as cofactor. The cofactor is Ca(2+). In terms of tissue distribution, expressed in roots and stems.

It is found in the secreted. The enzyme catalyses 2 a phenolic donor + H2O2 = 2 a phenolic radical donor + 2 H2O. Removal of H(2)O(2), oxidation of toxic reductants, biosynthesis and degradation of lignin, suberization, auxin catabolism, response to environmental stresses such as wounding, pathogen attack and oxidative stress. These functions might be dependent on each isozyme/isoform in each plant tissue. The chain is Peroxidase 11 (PER11) from Arabidopsis thaliana (Mouse-ear cress).